The chain runs to 715 residues: ATP-binding cassette sub-family B member 10, mitochondrial (715 aa).

Residues 1–82 constitute a mitochondrion transit peptide; the sequence is MRAPSARALL…SSGARRCWVL (82 aa). At 83–133 the chain is on the mitochondrial matrix side; that stretch reads AGPRAAHPLFARLQGAAATGVRDLGNDSQRRPAATGRSEVWKLLGLVRPER. A helical membrane pass occupies residues 134 to 157; it reads GRLSAAVGFLAVSSVITMSAPFFL. Residues 136-422 enclose the ABC transmembrane type-1 domain; sequence LSAAVGFLAV…LSSFYSELMK (287 aa). Residues 158-178 are Mitochondrial intermembrane-facing; it reads GRIIDVIYTNPSEGYGDSLTR. A helical transmembrane segment spans residues 179–201; it reads LCAVLTCVFLCGAAANGIRVYLM. At 202-252 the chain is on the mitochondrial matrix side; that stretch reads QSSGQSIVNRLRTSLFSSILRQEVAFFDKTRTGELINRLSSDTALLGRSVT. The residue at position 230 (Lys230) is an N6-acetyllysine. Residues 253 to 275 traverse the membrane as a helical segment; sequence ENLSDGLRAGAQASVGVGMMFFV. At 276 to 278 the chain is on the mitochondrial intermembrane side; the sequence is SPS. Residues 279–298 form a helical membrane-spanning segment; it reads LATFVLSVVPPISVLAVIYG. Residues 299-357 lie on the Mitochondrial matrix side of the membrane; sequence RYLRKLSKATQDSLAEATQLAEERIGNIRTIRAFGKEMTEVEKYTGRVDQLLQLAQKEA. Residues 358–381 traverse the membrane as a helical segment; it reads LARAGFFGAAGLSGNLIVLSVLYK. The Mitochondrial intermembrane segment spans residues 382 to 395; the sequence is GGLLMGSAHMTVGE. Residues 396-417 form a helical membrane-spanning segment; it reads LSSFLMYAFWVGLSIGGLSSFY. Residues 418 to 715 are Mitochondrial matrix-facing; that stretch reads SELMKGLGAG…AEQFLEPARA (298 aa). One can recognise an ABC transporter domain in the interval 457-696; that stretch reads LEFRNVHFTY…PNGLYRKLMN (240 aa). ATP contacts are provided by Gly495, Gly497, Lys498, Ser499, and Thr500. Residue Ser499 coordinates Mg(2+). At Cys547 the chain carries S-glutathionyl cysteine. Asp623 lines the Mg(2+) pocket.

Belongs to the ABC transporter superfamily. ABCB family. Mitochondrial peptide exporter (TC 3.A.1.212) subfamily. In terms of assembly, homodimer or homooligomer. Interacts with PAAT; this interaction regulates ABCB10. Interacts with SLC25A37; this interaction stabilizes SLC25A37 and enhances the function of SLC25A37 to import mitochondrial iron during erythroid differentiation. Interacts with FECH; this interaction may allow the formation of the oligomeric complex with SLC25A37. Forms a complex with ABCB7 and FECH, where a dimeric FECH bridges ABCB7 and ABCB10 homodimers; this complex may be required for cellular iron homeostasis, mitochondrial function and heme biosynthesis. As to expression, expressed at particularly high levels in fetal liver, and erythroid tissues of embryos and adults. Found also in adult bone marrow, liver and kidney, and at lower levels in heart, brain and spleen.

It localises to the mitochondrion inner membrane. It carries out the reaction biliverdin IXalpha(in) + ATP + H2O = biliverdin IXalpha(out) + ADP + phosphate + H(+). Oxidized glutathione (GSSG) stimulates ATP hydrolysis without affecting ATP binding, whereas reduced glutathione (GSH) inhibits ATP binding and hydrolysis. Functionally, ATP-dependent transporter located in the mitochondrial inner membrane that catalyzes the export of biliverdin from the mitochondrial matrix, and plays a crucial role in hemoglobin synthesis and antioxidative stress. Participates in the early step of the heme biosynthetic process during insertion of iron into protoporphyrin IX (PPIX). Involved in the stabilization of the iron transporter mitoferrin-1/SLC25A37. In addition may be involved in mitochondrial unfolded protein response (UPRmt) signaling pathway, although ABCB10 probably does not participate in peptide export from mitochondria. The chain is ATP-binding cassette sub-family B member 10, mitochondrial from Mus musculus (Mouse).